A 215-amino-acid polypeptide reads, in one-letter code: UPF0502 protein YceH (215 aa).

The protein belongs to the UPF0502 family.

The sequence is that of UPF0502 protein YceH from Salmonella heidelberg (strain SL476).